Reading from the N-terminus, the 200-residue chain is Large ribosomal subunit protein uL4 (200 aa).

Residues 42–65 (TRAQKTRSEVSGGGAKPWRQKGTG) form a disordered region.

The protein belongs to the universal ribosomal protein uL4 family. Part of the 50S ribosomal subunit.

Functionally, one of the primary rRNA binding proteins, this protein initially binds near the 5'-end of the 23S rRNA. It is important during the early stages of 50S assembly. It makes multiple contacts with different domains of the 23S rRNA in the assembled 50S subunit and ribosome. Its function is as follows. Forms part of the polypeptide exit tunnel. In Aliivibrio fischeri (strain MJ11) (Vibrio fischeri), this protein is Large ribosomal subunit protein uL4.